The primary structure comprises 89 residues: Protein S100-A8 (89 aa).

EF-hand domains lie at 13–48 (IDVY…FVQN) and 46–81 (VQNI…VGVA). The Zn(2+) site is built by His17 and His27. Asp33 lines the Ca(2+) pocket. Cys42 carries the post-translational modification S-nitrosocysteine. 4 residues coordinate Ca(2+): Asp59, Asn61, Asp63, and Glu70. Residue His83 coordinates Zn(2+).

This sequence belongs to the S-100 family. As to quaternary structure, homodimer. Preferentially exists as a heterodimer or heterotetramer with S100A9 known as calprotectin (S100A8/A9). Calprotectin (S100A8/9) interacts with CEACAM3 and tubulin filaments in a calcium-dependent manner. Heterotetrameric calprotectin (S100A8/A9) interacts with ANXA6 and associates with tubulin filaments in activated monocytes. S100A8 and calprotectin (S100A8/9) interact with NCF2/P67PHOX, RAC1 and RAC2. Calprotectin (S100A8/9) interacts with CYBA and CYBB. S100A8 interacts with AGER, ATP2A2 and with the heterodimeric complex formed by TLR4 and LY96. Calprotectin (S100A8/9) interacts with NOS2 to form the iNOS-S100A8/A9 transnitrosylase complex. Calprotectin (S100A8/9) interacts with CD69.

It localises to the secreted. The protein resides in the cytoplasm. The protein localises to the cytoskeleton. It is found in the cell membrane. Calprotectin (S100A8/A9) activity on TLR4 signaling is inhibited by paquinimod. Functionally, S100A8 is a calcium- and zinc-binding protein which plays a prominent role in the regulation of inflammatory processes and immune response. It can induce neutrophil chemotaxis and adhesion. Predominantly found as calprotectin (S100A8/A9) which has a wide plethora of intra- and extracellular functions. The intracellular functions include: facilitating leukocyte arachidonic acid trafficking and metabolism, modulation of the tubulin-dependent cytoskeleton during migration of phagocytes and activation of the neutrophilic NADPH-oxidase. Also participates in regulatory T-cell differentiation together with CD69. Activates NADPH-oxidase by facilitating the enzyme complex assembly at the cell membrane, transferring arachidonic acid, an essential cofactor, to the enzyme complex and S100A8 contributes to the enzyme assembly by directly binding to NCF2/P67PHOX. The extracellular functions involve pro-inflammatory, antimicrobial, oxidant-scavenging and apoptosis-inducing activities. Its pro-inflammatory activity includes recruitment of leukocytes, promotion of cytokine and chemokine production, and regulation of leukocyte adhesion and migration. Acts as an alarmin or a danger associated molecular pattern (DAMP) molecule and stimulates innate immune cells via binding to pattern recognition receptors such as Toll-like receptor 4 (TLR4) and receptor for advanced glycation endproducts (AGER). Binding to TLR4 and AGER activates the MAP-kinase and NF-kappa-B signaling pathways resulting in the amplification of the pro-inflammatory cascade. Has antimicrobial activity towards bacteria and fungi and exerts its antimicrobial activity probably via chelation of Zn(2+) which is essential for microbial growth. Can induce cell death via autophagy and apoptosis and this occurs through the cross-talk of mitochondria and lysosomes via reactive oxygen species (ROS) and the process involves BNIP3. Can regulate neutrophil number and apoptosis by an anti-apoptotic effect; regulates cell survival via ITGAM/ITGB and TLR4 and a signaling mechanism involving MEK-ERK. Its role as an oxidant scavenger has a protective role in preventing exaggerated tissue damage by scavenging oxidants. The iNOS-S100A8/A9 transnitrosylase complex is proposed to direct selective inflammatory stimulus-dependent S-nitrosylation of multiple targets such as GAPDH, ANXA5, EZR, MSN and VIM by recognizing a [IL]-x-C-x-x-[DE] motif; S100A8 seems to contribute to S-nitrosylation site selectivity. Its function is as follows. (Microbial infection) Upon infection by murine coronavirus (MHV-A59), induces expansion of aberrant immature neutrophils in a TLR4-dependent manner. This Mus musculus (Mouse) protein is Protein S100-A8.